The following is a 67-amino-acid chain: uncharacterized protein (67 aa).

2 helical membrane-spanning segments follow: residues 8–28 and 41–61; these read MWFA…IYLS and ISSF…VVVF.

The protein resides in the cell membrane. This is an uncharacterized protein from Bacillus subtilis (strain 168).